Reading from the N-terminus, the 398-residue chain is S-adenosylmethionine synthase (398 aa).

Residue 136-141 coordinates ATP; the sequence is GTGSSD.

The protein belongs to the AdoMet synthase 2 family. Requires Mg(2+) as cofactor.

It carries out the reaction L-methionine + ATP + H2O = S-adenosyl-L-methionine + phosphate + diphosphate. It functions in the pathway amino-acid biosynthesis; S-adenosyl-L-methionine biosynthesis; S-adenosyl-L-methionine from L-methionine: step 1/1. Catalyzes the formation of S-adenosylmethionine from methionine and ATP. In Methanosarcina acetivorans (strain ATCC 35395 / DSM 2834 / JCM 12185 / C2A), this protein is S-adenosylmethionine synthase.